The primary structure comprises 282 residues: Bis(5'-nucleosyl)-tetraphosphatase, symmetrical (282 aa).

It belongs to the Ap4A hydrolase family.

The catalysed reaction is P(1),P(4)-bis(5'-adenosyl) tetraphosphate + H2O = 2 ADP + 2 H(+). Its function is as follows. Hydrolyzes diadenosine 5',5'''-P1,P4-tetraphosphate to yield ADP. The polypeptide is Bis(5'-nucleosyl)-tetraphosphatase, symmetrical (Escherichia coli O127:H6 (strain E2348/69 / EPEC)).